Here is a 465-residue protein sequence, read N- to C-terminus: Serine carboxypeptidase 24 (465 aa).

Residues 1–24 (MARTHFIFLLLVALLSTTFPSSSS) form the signal peptide. N-linked (GlcNAc...) asparagine glycosylation is found at Asn54, Asn105, and Asn139. 3 cysteine pairs are disulfide-bonded: Cys88-Cys349, Cys249-Cys260, and Cys285-Cys317. Residue Ser181 is part of the active site. 3 N-linked (GlcNAc...) asparagine glycosylation sites follow: Asn250, Asn293, and Asn338. Residues 287–316 (AAQQKKNTTGFFVRMKNTLLRRRLVSGYDP) constitute a propeptide, linker peptide. Active-site residues include Asp386 and His438.

Belongs to the peptidase S10 family. Heterodimer. N-glycosylated. Expressed in shoots, leaves, cauline leaves, siliques and flowers. Expressed a low levels in roots and stems.

Its subcellular location is the secreted. It localises to the extracellular space. The enzyme catalyses Preferential release of a C-terminal arginine or lysine residue.. Its activity is regulated as follows. Completely inhibited by phenylmethylsulfonyl fluoride (PMSF) and partially by leupeptin. In terms of biological role, active serine carboxypeptidase with broad substrate preference, including basic and hydrophilic groups. Processes a protein involved in an early event in the brassinosteroid signaling pathway. This Arabidopsis thaliana (Mouse-ear cress) protein is Serine carboxypeptidase 24 (SCPL24).